The chain runs to 286 residues: Ribosomal RNA small subunit methyltransferase A (286 aa).

6 residues coordinate S-adenosyl-L-methionine: N28, L30, G55, E77, D103, and N123.

Belongs to the class I-like SAM-binding methyltransferase superfamily. rRNA adenine N(6)-methyltransferase family. RsmA subfamily.

It localises to the cytoplasm. The catalysed reaction is adenosine(1518)/adenosine(1519) in 16S rRNA + 4 S-adenosyl-L-methionine = N(6)-dimethyladenosine(1518)/N(6)-dimethyladenosine(1519) in 16S rRNA + 4 S-adenosyl-L-homocysteine + 4 H(+). Specifically dimethylates two adjacent adenosines (A1518 and A1519) in the loop of a conserved hairpin near the 3'-end of 16S rRNA in the 30S particle. May play a critical role in biogenesis of 30S subunits. This Bradyrhizobium sp. (strain BTAi1 / ATCC BAA-1182) protein is Ribosomal RNA small subunit methyltransferase A.